The sequence spans 104 residues: Large ribosomal subunit protein uL24 (104 aa).

It belongs to the universal ribosomal protein uL24 family. In terms of assembly, part of the 50S ribosomal subunit.

Functionally, one of two assembly initiator proteins, it binds directly to the 5'-end of the 23S rRNA, where it nucleates assembly of the 50S subunit. One of the proteins that surrounds the polypeptide exit tunnel on the outside of the subunit. This chain is Large ribosomal subunit protein uL24, found in Flavobacterium johnsoniae (strain ATCC 17061 / DSM 2064 / JCM 8514 / BCRC 14874 / CCUG 350202 / NBRC 14942 / NCIMB 11054 / UW101) (Cytophaga johnsonae).